The sequence spans 256 residues: Proteasome subunit alpha-type 8 (256 aa).

Belongs to the peptidase T1A family. Component of the outer alpha-ring of the 20S proteasome core which is composed of 28 subunits that are arranged in four stacked rings, resulting in a barrel-shaped structure. The catalytic chamber with the active sites is on the inside of the barrel. Interacts with canonical subunits of the spermatoproteasome, including proteasome activators PSME4 (also called PA200) and PSME3 (also called PA28-gamma). Interacts with proteasome-interacting proteins chaperones, ubiquitin ligases and ubiquitin specific proteases. Interacts with meiotic proteins cyclin dependent kinase CDK1 and the ATPase TRIP13 as well as proteins of the synaptonemal complex SIX6OS1 and SYCE3.

It localises to the nucleus. In terms of biological role, component of the spermatoproteasome, a proteasome specifically found in testis that promotes acetylation-dependent degradation of histones, thereby participating actively to the exchange of histones during spermatogenesis. The proteasome is a protein complex that degrades unneeded or damaged proteins by proteolysis, a chemical reaction that breaks peptide bonds. Required for 20S core proteasome assembly, essential for the degradation of meiotic proteins RAD51 and RPA1 at late prophase I and the progression of meiosis I during spermatogenesis. Localizes to the synaptonemal complex, a 'zipper'-like structure that holds homologous chromosome pairs in synapsis during meiotic prophase I. The chain is Proteasome subunit alpha-type 8 (PSMA8) from Homo sapiens (Human).